A 195-amino-acid chain; its full sequence is Flavin-dependent monooxygenase, reductase subunit HsaB (195 aa).

FAD is bound by residues 42 to 46, 48 to 49, 63 to 65, 69 to 70, and 95 to 96; these read PVGFA, QS, CPT, RS, and RF. Residue 160–163 participates in NAD(+) binding; the sequence is FYRG.

This sequence belongs to the non-flavoprotein flavin reductase family. As to quaternary structure, hsaAB monooxygenase consists of an oxygenase component HsaA and a reductase component HsaB.

It catalyses the reaction a reduced flavin + NAD(+) = an oxidized flavin + NADH + 2 H(+). It participates in lipid metabolism; steroid biosynthesis. In terms of biological role, catalyzes the reduction of free flavins (FMN or FAD) by NADH. Subsequently, the reduced flavins diffuse to the HsaA oxygenase subunit. This Rhodococcus jostii (strain RHA1) protein is Flavin-dependent monooxygenase, reductase subunit HsaB (hsaB).